The following is a 162-amino-acid chain: Transmembrane protein 92 (162 aa).

The signal sequence occupies residues 1–22 (MLDTWVWGTLTLTFGLLSSLQG). At 23–63 (VSFNETANTCDILNCPKGFTCCVKECCPERKVWDPANDRFR) the chain is on the extracellular side. Residues 64–84 (FLVILACIIFPILFICALVSL) form a helical membrane-spanning segment. The Cytoplasmic portion of the chain corresponds to 85 to 162 (FCPNCTELQH…QMRGRAYATL (78 aa)). The disordered stretch occupies residues 134 to 162 (TPPTEPPPPYSLRPEGPAGQMRGRAYATL).

The protein localises to the membrane. The polypeptide is Transmembrane protein 92 (Tmem92) (Mus musculus (Mouse)).